We begin with the raw amino-acid sequence, 291 residues long: Protease HtpX homolog (291 aa).

The next 2 helical transmembrane spans lie at 4–24 and 38–58; these read IVLFLLTNFAVILVLSISARL and MGMLLAFAALIGFGGSFISLM. Position 144 (histidine 144) interacts with Zn(2+). Glutamate 145 is an active-site residue. Position 148 (histidine 148) interacts with Zn(2+). A run of 2 helical transmembrane segments spans residues 152-172 and 199-219; these read GDMVTLTLIQGVVNTFVIFLA and VSSIAFEIMFGILASIVVMFF. Zn(2+) is bound at residue glutamate 224.

This sequence belongs to the peptidase M48B family. Requires Zn(2+) as cofactor.

The protein resides in the cell inner membrane. This Prosthecochloris aestuarii (strain DSM 271 / SK 413) protein is Protease HtpX homolog.